Reading from the N-terminus, the 969-residue chain is MMSDASDMLAAALEQMDGIIAGSKALEYSNGIFDCQSPTSPFMGSLRALHLVEDLRGLLEMMETDEKEGLRCQIPDSTAEVLIEWLQNQMTNGHLPGNGDVYQERLARLENDKESLVLQVSVLTDQVEAQGEKIRDLEFCLEEHREKLNATEEMLQQELLSRTSLETQKLELMAEISNLKLKLTAVEKDRLDYEDRFRDTEGLIQEINDLRLKVNEMDGERLQYEKKLKSTKDELASLKEQLEEKECEVKRLQERLVCKAKGEGIEVLDRDIEVQKMKKAVESLMAANEEKERKIEDLRQCLSRYRKMQDPAVLAQGQDSECEGLFHSSSISTLLDAQGFSDLERSTSSTPGMGSPSRDLLHTSAPEEFHTSVLQASIPSLLPPSVDVDTCEKPKLPTKPETSFEEGDGRAILGAAAEVSLSDGVSTSSLQKSSSLGNLKKEASDGTDKAPTDSRTFGTLPPKVPGHEASVDDNPFGTRKARSSFGRGFFKIKSGKRTASAPNLAETEKETAEHLNLAGTSRSKGSQGTSPFPMSPPSPDSRKKSRGIMRLFGKLRRSQSTTFNPDDMSEPEFKRGGTRATAGPRLGWSRDLGQSNSDLDMPFAKWTKEQVCSWLAEQGLGSYLSSGKHWIISGQTLLQASQQDLEKELGIKHSLHRKKLQLALQALGSEEETNYGKLDFNWVTRWLDDIGLPQYKTQFDEGRVDGRMLHYMTVDDLLSLKVVSVLHHLSIKRAIQVLRINNFEPNCLRRRPSDENSITPSEVQQWTNHRVMEWLRSVDLAEYAPNLRGSGVHGGLMVLEPRFNVETMAQLLNIPPNKTLLRRHLATHFNLLIGAEAQHQKRDAMELPDYVLLTATAKVKPKKLTFSNFGNLRKKKHEDGEEYVCPMELGQASGSSQKGFRPGLDMRLYEEDDLDRLEQMEDSEGTVRQIGAFSEGINNLTHMLKEDDMFKDFAARSPSASITDEDSNV.

Phosphoserine is present on Ser37. At Thr39 the chain carries Phosphothreonine. Phosphoserine is present on Ser40. Positions 99–310 (GDVYQERLAR…CLSRYRKMQD (212 aa)) form a coiled coil. Lys291 is modified (N6-acetyllysine). 3 disordered regions span residues 342-361 (DLER…RDLL), 381-407 (LLPP…FEEG), and 424-482 (GVST…RKAR). Residues 346-358 (STSSTPGMGSPSR) show a composition bias toward low complexity. Phosphoserine occurs at positions 403 and 435. Low complexity predominate over residues 426 to 438 (STSSLQKSSSLGN). Positions 439–452 (LKKEASDGTDKAPT) are enriched in basic and acidic residues. Lys440 participates in a covalent cross-link: Glycyl lysine isopeptide (Lys-Gly) (interchain with G-Cter in SUMO2). Ser500 carries the post-translational modification Phosphoserine. Positions 518-529 (AGTSRSKGSQGT) are enriched in polar residues. Positions 518 to 593 (AGTSRSKGSQ…PRLGWSRDLG (76 aa)) are disordered. At Ser538 the chain carries Phosphoserine. The span at 543 to 557 (KKSRGIMRLFGKLRR) shows a compositional bias: basic residues. Phosphoserine is present on residues Ser560 and Ser595. 2 SAM domains span residues 606 to 670 (WTKE…LGSE) and 678 to 741 (LDFN…LRIN). 2 positions are modified to phosphoserine: Ser753 and Ser757. The SAM 3 domain occupies 763 to 835 (VQQWTNHRVM…ATHFNLLIGA (73 aa)). Phosphoserine occurs at positions 957, 959, and 961. Thr963 carries the phosphothreonine modification.

The protein belongs to the liprin family. Liprin-beta subfamily. As to quaternary structure, forms homodimers and heterodimers. Interacts with S100A4 in a Ca(2+)-dependent mode. Part of a cortical microtubule stabilization complex (CMSC) composed of KANK1, PPFIA1, PPFIBP1, ERC1/ELKS, PHLDB2/LL5beta, CLASPs, KIF21A and possibly additional interactors; within CMSCs KANK1 and PHLDB2/LL5beta seem to be the core components for recruiting microtubule-binding proteins KIF21A and CLASPs, whereas PPFIA1, PPFIBP1 and ERC1/ELKS serve as scaffolds for protein clustering. Interacts with KANK1 (via CC1 domain, residues 244-339).

Its subcellular location is the cytoplasm. It localises to the cell cortex. May regulate the disassembly of focal adhesions. Did not bind receptor-like tyrosine phosphatases type 2A. This Mus musculus (Mouse) protein is Liprin-beta-1 (Ppfibp1).